Here is a 551-residue protein sequence, read N- to C-terminus: RCC1 and BTB domain-containing protein 2 (551 aa).

RCC1 repeat units lie at residues 64–115 (NDEI…VLAT), 117–169 (DGEV…VLTS), 171–222 (GEVF…AVVD), 223–274 (TGEV…VLTD), 276–326 (GQIY…AAKT), and 328–382 (GGHV…TVAE). The BTB domain maps to 394–457 (ADLKFLVDGK…LYTDNISLSP (64 aa)).

Expressed in testis and heart (at protein level).

It is found in the cytoplasmic vesicle. It localises to the secretory vesicle. The protein localises to the acrosome. The protein is RCC1 and BTB domain-containing protein 2 (Rcbtb2) of Mus musculus (Mouse).